We begin with the raw amino-acid sequence, 584 residues long: Aspartate--tRNA ligase (584 aa).

Residue glutamate 169 participates in L-aspartate binding. Residues 193–196 (QLFK) form an aspartate region. Arginine 215 provides a ligand contact to L-aspartate. Residues 215-217 (RDE) and glutamine 224 contribute to the ATP site. Histidine 446 lines the L-aspartate pocket. Glutamate 480 is an ATP binding site. Arginine 487 lines the L-aspartate pocket. 532–535 (GLDR) is a binding site for ATP.

This sequence belongs to the class-II aminoacyl-tRNA synthetase family. Type 1 subfamily. Homodimer.

It is found in the cytoplasm. The catalysed reaction is tRNA(Asp) + L-aspartate + ATP = L-aspartyl-tRNA(Asp) + AMP + diphosphate. Catalyzes the attachment of L-aspartate to tRNA(Asp) in a two-step reaction: L-aspartate is first activated by ATP to form Asp-AMP and then transferred to the acceptor end of tRNA(Asp). The chain is Aspartate--tRNA ligase from Buchnera aphidicola subsp. Schizaphis graminum (strain Sg).